The chain runs to 178 residues: Cytochrome b6-f complex iron-sulfur subunit (178 aa).

A helical transmembrane segment spans residues 20-42 (LLTFGTATGVALGALYPVANYFM). A Rieske domain is found at 65–161 (KTGWLATHQA…VDIEDDAVLV (97 aa)). The [2Fe-2S] cluster site is built by Cys107, His109, Cys125, and His128. An intrachain disulfide couples Cys112 to Cys127.

Belongs to the Rieske iron-sulfur protein family. In terms of assembly, the 4 large subunits of the cytochrome b6-f complex are cytochrome b6, subunit IV (17 kDa polypeptide, PetD), cytochrome f and the Rieske protein, while the 4 small subunits are PetG, PetL, PetM and PetN. The complex functions as a dimer. It depends on [2Fe-2S] cluster as a cofactor.

Its subcellular location is the cellular thylakoid membrane. The enzyme catalyses 2 oxidized [plastocyanin] + a plastoquinol + 2 H(+)(in) = 2 reduced [plastocyanin] + a plastoquinone + 4 H(+)(out). Component of the cytochrome b6-f complex, which mediates electron transfer between photosystem II (PSII) and photosystem I (PSI), cyclic electron flow around PSI, and state transitions. The protein is Cytochrome b6-f complex iron-sulfur subunit of Prochlorococcus marinus (strain MIT 9301).